The chain runs to 174 residues: uncharacterized protein (174 aa).

Residues 42 to 174 (SSNKNINLYE…GVKGMFWYPR (133 aa)) form the N-acetyltransferase domain.

The protein belongs to the acetyltransferase family. Ycf52 subfamily.

The protein resides in the plastid. The protein localises to the chloroplast. This is an uncharacterized protein from Pyropia yezoensis (Susabi-nori).